Here is a 414-residue protein sequence, read N- to C-terminus: MFRLTDFTYHGKTVFLRADLNSPVKDGRIISDARFRAVLPTIQHLLDEGAKLVIGTHQSKPYKGDYITTEQHAEILSNLLGQEVEYVEDIFGKYARERIKTLKPGEAIILENLRFAAEDVKYKPLEECERTHFVRKLAPLLDYVVNDAFAAAHRSQPSLVGLARLKPMIMGFLMEKEVEALSRAYETNEKPRIYVLGGAKVDDSLRVAENVLRNGRADLILTGGLVGHVFTLAKGFHLGDANLEFMAKKGLLELVDWAENILDEFYPYVRTPVDFAVDYKGERVEVDLLSDEKWLFDKYPILDIGSRTIEKYRDVLMNARVIVANGPMGVFEREEFALGTVGVFRAIGESQAFSVVGGGHSIASIYQYNITGISHVSTGGGAMLSFFSGEKLPILEAFRISYERFKDKIERGPK.

Substrate-binding positions include 19 to 21, Arg34, 57 to 60, Arg114, and Arg154; these read DLN and HQSK. Residues Glu332 and 358–361 contribute to the ATP site; that span reads GGHS.

This sequence belongs to the phosphoglycerate kinase family. Monomer.

The protein resides in the cytoplasm. It carries out the reaction (2R)-3-phosphoglycerate + ATP = (2R)-3-phospho-glyceroyl phosphate + ADP. It participates in carbohydrate degradation; glycolysis; pyruvate from D-glyceraldehyde 3-phosphate: step 2/5. The chain is Phosphoglycerate kinase from Thermococcus onnurineus (strain NA1).